A 288-amino-acid polypeptide reads, in one-letter code: Ribosomal RNA small subunit methyltransferase A (288 aa).

Residues Asn-28, Leu-30, Gly-55, Glu-76, Asp-101, and Asn-130 each coordinate S-adenosyl-L-methionine.

Belongs to the class I-like SAM-binding methyltransferase superfamily. rRNA adenine N(6)-methyltransferase family. RsmA subfamily.

It localises to the cytoplasm. The enzyme catalyses adenosine(1518)/adenosine(1519) in 16S rRNA + 4 S-adenosyl-L-methionine = N(6)-dimethyladenosine(1518)/N(6)-dimethyladenosine(1519) in 16S rRNA + 4 S-adenosyl-L-homocysteine + 4 H(+). In terms of biological role, specifically dimethylates two adjacent adenosines (A1518 and A1519) in the loop of a conserved hairpin near the 3'-end of 16S rRNA in the 30S particle. May play a critical role in biogenesis of 30S subunits. This Moorella thermoacetica (strain ATCC 39073 / JCM 9320) protein is Ribosomal RNA small subunit methyltransferase A.